The following is a 329-amino-acid chain: uncharacterized protein (329 aa).

10 helical membrane-spanning segments follow: residues 9–29 (LMGLLIVLLAAIFFCFHNVIV), 53–73 (SHSFLLLLLRMLWVVPLMALI), 105–125 (FLMFLYLVLLYISISFIPTGI), 126–146 (AITLFFTYPIFTALLAWRLFN), 154–174 (WLVIGLTLIGTFLTIPYAYGG), 179–199 (LVLGVSTGIASGIVYAGYTVF), 210–230 (VPFTWISFATTLILSILCLII), 240–260 (WLAITIGSLLSALFTLAGHVL), 273–293 (AAIIGATNPALTVVLAGLAIQ), and 296–316 (LTNIQIFGVCLVTFSIALLNY). EamA domains lie at 103 to 169 (CGFL…LTIP) and 191 to 316 (IVYA…LLNY).

Belongs to the EamA transporter family.

The protein resides in the cell membrane. This is an uncharacterized protein from Synechocystis sp. (strain ATCC 27184 / PCC 6803 / Kazusa).